Consider the following 109-residue polypeptide: FK506-binding protein (109 aa).

In terms of domain architecture, PPIase FKBP-type spans 20 to 108; the sequence is GKEITVHYTG…IFEVELLKVY (89 aa).

Belongs to the FKBP-type PPIase family.

It catalyses the reaction [protein]-peptidylproline (omega=180) = [protein]-peptidylproline (omega=0). Inhibited by FK506. Its function is as follows. PPIases accelerate the folding of proteins. In Neisseria meningitidis serogroup B (strain ATCC BAA-335 / MC58), this protein is FK506-binding protein (fbp).